The following is a 115-amino-acid chain: Putative membrane protein insertion efficiency factor (115 aa).

Residues 81–115 form a disordered region; the sequence is DPRPGRCGCKDAGPAVSAGSTEGNPGRRTDGTDPD. The span at 105–115 shows a compositional bias: basic and acidic residues; it reads PGRRTDGTDPD.

This sequence belongs to the UPF0161 family.

It is found in the cell inner membrane. Its function is as follows. Could be involved in insertion of integral membrane proteins into the membrane. The protein is Putative membrane protein insertion efficiency factor of Rhodospirillum rubrum (strain ATCC 11170 / ATH 1.1.1 / DSM 467 / LMG 4362 / NCIMB 8255 / S1).